A 312-amino-acid chain; its full sequence is GATA zinc finger domain-containing protein 20 (312 aa).

Disordered stretches follow at residues 1-45 (MGKR…PQQP) and 213-232 (TIGS…TNTN). Residues 29–45 (QQQQQQQEQQPQQPQQP) are compositionally biased toward low complexity. The segment at 260 to 287 (CYVCGVTETPYWRRGTDEGVMVDLCNAC) adopts a GATA-type zinc-finger fold.

The sequence is that of GATA zinc finger domain-containing protein 20 (gtaT) from Dictyostelium discoideum (Social amoeba).